Consider the following 546-residue polypeptide: Chaperonin GroEL (546 aa).

ATP contacts are provided by residues 29–32, lysine 50, 86–90, glycine 414, 477–479, and aspartate 493; these read TLGP, DGTTT, and NAL.

It belongs to the chaperonin (HSP60) family. As to quaternary structure, forms a cylinder of 14 subunits composed of two heptameric rings stacked back-to-back. Interacts with the co-chaperonin GroES.

Its subcellular location is the cytoplasm. It carries out the reaction ATP + H2O + a folded polypeptide = ADP + phosphate + an unfolded polypeptide.. In terms of biological role, together with its co-chaperonin GroES, plays an essential role in assisting protein folding. The GroEL-GroES system forms a nano-cage that allows encapsulation of the non-native substrate proteins and provides a physical environment optimized to promote and accelerate protein folding. The protein is Chaperonin GroEL of Leptospira interrogans serogroup Icterohaemorrhagiae serovar Lai (strain 56601).